We begin with the raw amino-acid sequence, 126 residues long: Histone H2B type 2-E (126 aa).

Low complexity predominate over residues Met-1–Lys-12. The segment at Met-1 to Lys-35 is disordered. Position 2 is an N-acetylproline (Pro-2). Glu-3 bears the ADP-ribosyl glutamic acid mark. An N6-(2-hydroxyisobutyryl)lysine; alternate modification is found at Lys-6. The residue at position 6 (Lys-6) is an N6-(beta-hydroxybutyryl)lysine; alternate. Lys-6 is modified (N6-acetyllysine; alternate). Position 6 is an N6-butyryllysine; alternate (Lys-6). Residue Lys-6 is modified to N6-crotonyllysine; alternate. Residue Lys-6 is modified to N6-lactoyllysine; alternate. Lys-6 is covalently cross-linked (Glycyl lysine isopeptide (Lys-Gly) (interchain with G-Cter in SUMO2); alternate). Ser-7 carries the post-translational modification ADP-ribosylserine. Position 12 is an N6-(beta-hydroxybutyryl)lysine; alternate (Lys-12). N6-acetyllysine; alternate is present on residues Lys-12 and Lys-13. Residues Lys-12 and Lys-13 each carry the N6-crotonyllysine; alternate modification. N6-lactoyllysine; alternate is present on Lys-12. Position 13 is an N6-(2-hydroxyisobutyryl)lysine; alternate (Lys-13). Residue Ser-15 is modified to Phosphoserine; by STK4/MST1. 4 positions are modified to N6-acetyllysine; alternate: Lys-16, Lys-17, Lys-21, and Lys-24. 4 positions are modified to N6-crotonyllysine; alternate: Lys-16, Lys-17, Lys-21, and Lys-24. 4 positions are modified to N6-lactoyllysine; alternate: Lys-16, Lys-17, Lys-21, and Lys-24. Residues Lys-17 and Lys-21 each carry the N6-(beta-hydroxybutyryl)lysine; alternate modification. Position 17 is an N6-glutaryllysine; alternate (Lys-17). An N6-(2-hydroxyisobutyryl)lysine; alternate mark is found at Lys-21 and Lys-24. Lys-21 carries the N6-butyryllysine; alternate modification. Lys-21 participates in a covalent cross-link: Glycyl lysine isopeptide (Lys-Gly) (interchain with G-Cter in SUMO2); alternate. Lys-25 bears the N6-(2-hydroxyisobutyryl)lysine mark. N6-(2-hydroxyisobutyryl)lysine; alternate is present on Lys-35. Position 35 is an N6-(beta-hydroxybutyryl)lysine; alternate (Lys-35). Lys-35 bears the N6-crotonyllysine; alternate mark. N6-glutaryllysine; alternate is present on Lys-35. Lys-35 is subject to N6-succinyllysine; alternate. Lys-35 is covalently cross-linked (Glycyl lysine isopeptide (Lys-Gly) (interchain with G-Cter in ubiquitin); alternate). PolyADP-ribosyl glutamic acid is present on Glu-36. Ser-37 carries the phosphoserine; by AMPK modification. N6-(2-hydroxyisobutyryl)lysine; alternate is present on residues Lys-44, Lys-47, and Lys-58. Lys-44 carries the post-translational modification N6-lactoyllysine; alternate. 2 positions are modified to N6-glutaryllysine; alternate: Lys-44 and Lys-47. The residue at position 47 (Lys-47) is an N6-methyllysine; alternate. Residue Lys-58 is modified to N6,N6-dimethyllysine; alternate. Arg-80 carries the dimethylated arginine modification. Lys-86 carries the post-translational modification N6-(2-hydroxyisobutyryl)lysine; alternate. Lys-86 carries the N6-(beta-hydroxybutyryl)lysine; alternate modification. Lys-86 is modified (N6-acetyllysine; alternate). Residue Lys-86 is modified to N6-lactoyllysine; alternate. Lys-86 carries the N6,N6,N6-trimethyllysine; alternate modification. 2 positions are modified to omega-N-methylarginine: Arg-87 and Arg-93. Lys-109 bears the N6-(2-hydroxyisobutyryl)lysine; alternate mark. An N6-lactoyllysine; alternate modification is found at Lys-109. The residue at position 109 (Lys-109) is an N6-glutaryllysine; alternate. At Lys-109 the chain carries N6-methyllysine; alternate. Residue Ser-113 is glycosylated (O-linked (GlcNAc) serine). At Thr-116 the chain carries Phosphothreonine. N6-(2-hydroxyisobutyryl)lysine; alternate occurs at positions 117 and 121. N6-(beta-hydroxybutyryl)lysine; alternate occurs at positions 117 and 121. N6-lactoyllysine; alternate is present on residues Lys-117 and Lys-121. An N6-glutaryllysine; alternate mark is found at Lys-117 and Lys-121. Lys-117 and Lys-121 each carry N6-succinyllysine; alternate. Position 117 is an N6-malonyllysine; alternate (Lys-117). At Lys-117 the chain carries N6-methylated lysine; alternate. Lys-121 participates in a covalent cross-link: Glycyl lysine isopeptide (Lys-Gly) (interchain with G-Cter in ubiquitin); alternate.

It belongs to the histone H2B family. As to quaternary structure, the nucleosome is a histone octamer containing two molecules each of H2A, H2B, H3 and H4 assembled in one H3-H4 heterotetramer and two H2A-H2B heterodimers. The octamer wraps approximately 147 bp of DNA. In terms of processing, monoubiquitination at Lys-35 (H2BK34Ub) by the MSL1/MSL2 dimer is required for histone H3 'Lys-4' (H3K4me) and 'Lys-79' (H3K79me) methylation and transcription activation at specific gene loci, such as HOXA9 and MEIS1 loci. Similarly, monoubiquitination at Lys-121 (H2BK120Ub) by the RNF20/40 complex gives a specific tag for epigenetic transcriptional activation and is also prerequisite for histone H3 'Lys-4' and 'Lys-79' methylation. It also functions cooperatively with the FACT dimer to stimulate elongation by RNA polymerase II. H2BK120Ub also acts as a regulator of mRNA splicing: deubiquitination by USP49 is required for efficient cotranscriptional splicing of a large set of exons. Phosphorylation at Ser-37 (H2BS36ph) by AMPK in response to stress promotes transcription. Phosphorylated on Ser-15 (H2BS14ph) by STK4/MST1 during apoptosis; which facilitates apoptotic chromatin condensation. Also phosphorylated on Ser-15 in response to DNA double strand breaks (DSBs), and in correlation with somatic hypermutation and immunoglobulin class-switch recombination. Post-translationally, glcNAcylation at Ser-113 promotes monoubiquitination of Lys-121. It fluctuates in response to extracellular glucose, and associates with transcribed genes. In terms of processing, ADP-ribosylated by PARP1 or PARP2 on Ser-7 (H2BS6ADPr) in response to DNA damage. H2BS6ADPr promotes recruitment of CHD1L. Mono-ADP-ribosylated on Glu-3 (H2BE2ADPr) by PARP3 in response to single-strand breaks. Poly ADP-ribosylation on Glu-36 (H2BE35ADPr) by PARP1 regulates adipogenesis: it inhibits phosphorylation at Ser-37 (H2BS36ph), thereby blocking expression of pro-adipogenetic genes. Crotonylation (Kcr) is specifically present in male germ cells and marks testis-specific genes in post-meiotic cells, including X-linked genes that escape sex chromosome inactivation in haploid cells. Crotonylation marks active promoters and enhancers and confers resistance to transcriptional repressors. It is also associated with post-meiotically activated genes on autosomes. Post-translationally, lactylated in macrophages by EP300/P300 by using lactoyl-CoA directly derived from endogenous or exogenous lactate, leading to stimulates gene transcription.

It is found in the nucleus. Its subcellular location is the chromosome. Functionally, core component of nucleosome. Nucleosomes wrap and compact DNA into chromatin, limiting DNA accessibility to the cellular machineries which require DNA as a template. Histones thereby play a central role in transcription regulation, DNA repair, DNA replication and chromosomal stability. DNA accessibility is regulated via a complex set of post-translational modifications of histones, also called histone code, and nucleosome remodeling. Has broad antibacterial activity. May contribute to the formation of the functional antimicrobial barrier of the colonic epithelium, and to the bactericidal activity of amniotic fluid. In Homo sapiens (Human), this protein is Histone H2B type 2-E.